Consider the following 376-residue polypeptide: Cell adhesion molecule CEACAM18 (376 aa).

The first 30 residues, 1 to 30, serve as a signal peptide directing secretion; it reads MDFSRPSFSPWRWLTLVASLLTCGICQASG. Residues 31-330 lie on the Extracellular side of the membrane; the sequence is QIFISPDSLL…PLPTVNRELY (300 aa). N-linked (GlcNAc...) asparagine glycosylation is found at Asn-69, Asn-95, and Asn-110. The Ig-like C2-type domain maps to 229 to 314; that stretch reads PDYVSLWTQP…TQLTFYRDVT (86 aa). The cysteines at positions 257 and 298 are disulfide-linked. A helical transmembrane segment spans residues 331-351; it reads IPGPLVIFLILLTSLGGAFVC. Residues 352–376 are Cytoplasmic-facing; sequence RVLVYSLFQSCSRGKTCHKCPWQTN.

Belongs to the immunoglobulin superfamily. CEA family. Mostly expressed in the small and large intestine and at lower levels also in other organs.

It is found in the membrane. In Mus musculus (Mouse), this protein is Cell adhesion molecule CEACAM18.